We begin with the raw amino-acid sequence, 98 residues long: Putative pterin-4-alpha-carbinolamine dehydratase (98 aa).

The protein belongs to the pterin-4-alpha-carbinolamine dehydratase family.

It catalyses the reaction (4aS,6R)-4a-hydroxy-L-erythro-5,6,7,8-tetrahydrobiopterin = (6R)-L-erythro-6,7-dihydrobiopterin + H2O. This Parasynechococcus marenigrum (strain WH8102) protein is Putative pterin-4-alpha-carbinolamine dehydratase.